The primary structure comprises 48 residues: Small polypeptide DEVIL 22 (48 aa).

A helical transmembrane segment spans residues 7–23; it reads KLNKGHAFTSKCASLVK. The interval 13 to 44 is required for DVL/RTFL small polypeptide activity; the sequence is AFTSKCASLVKEQRARLYILRRCATMLCCWYI.

The protein belongs to the DVL/RTFL small polypeptides family.

The protein localises to the cell membrane. Functionally, small polypeptide acting as a regulatory molecule which coordinates cellular responses required for differentiation, growth and development, probably by restricting polar cell proliferation in lateral organs and coordinating socket cell recruitment and differentiation at trichome sites. This Arabidopsis thaliana (Mouse-ear cress) protein is Small polypeptide DEVIL 22.